The sequence spans 190 residues: uncharacterized protein (190 aa).

The protein belongs to the Iojap/RsfS family.

This is an uncharacterized protein from Caenorhabditis elegans.